Reading from the N-terminus, the 875-residue chain is GATOR2 complex protein MIOS (875 aa).

WD repeat units lie at residues 61–100 (PYMK…NSKF), 111–155 (KHAR…TPDI), 182–221 (GQND…QKMF), 223–261 (NTKA…KPVL), 265–306 (EQPK…TPIG), and 395–437 (RLRA…KQYT). Residues 735 to 781 (VSCNFCGKSISYSCSAVPHQGRGFSQYGVSGSPTKSKVTSCPGCRKP) form a C4-type zinc finger. Positions 737 and 740 each coordinate Zn(2+). Residues S759 and S766 each carry the phosphoserine modification. Zn(2+) contacts are provided by C775, C778, C788, C827, C830, H832, H835, H838, C849, C854, and C858. Residues 782–863 (LPRCALCLIN…CTCKCMQLDT (82 aa)) form an RING-type; atypical zinc finger.

It belongs to the WD repeat mio family. Component of the GATOR2 subcomplex, composed of MIOS, SEC13, SEH1L, WDR24 and WDR59. The GATOR2 complex interacts with CASTOR1 and CASTOR2; the interaction is negatively regulated by arginine. CASTOR1 and CASTOR2 convey leucine availability via direct interaction with MIOS. The GATOR2 complex interacts with SESN1, SESN2 and SESN3; the interaction is negatively regulated by amino acids. Interacts with SAR1A and SAR1B; the interaction is direct, disrupted by leucine and mediates the interaction of SAR1A or SAR1B with the GATOR2 complex to negatively regulate the TORC1 signaling upon leucine deprivation.

It localises to the lysosome membrane. With respect to regulation, the GATOR2 complex is negatively regulated by the upstream amino acid sensors CASTOR1 and SESN2, which sequester the GATOR2 complex in absence of amino acids. In the presence of abundant amino acids, GATOR2 is released from CASTOR1 and SESN2 and activated. Functionally, as a component of the GATOR2 complex, functions as an activator of the amino acid-sensing branch of the mTORC1 signaling pathway. The GATOR2 complex indirectly activates mTORC1 through the inhibition of the GATOR1 subcomplex. GATOR2 probably acts as an E3 ubiquitin-protein ligase toward GATOR1. In the presence of abundant amino acids, the GATOR2 complex mediates ubiquitination of the NPRL2 core component of the GATOR1 complex, leading to GATOR1 inactivation. In the absence of amino acids, GATOR2 is inhibited, activating the GATOR1 complex. Within the GATOR2 complex, MIOS is required to prevent autoubiquitination of WDR24, the catalytic subunit of the complex. The GATOR2 complex is required for brain myelination. The polypeptide is GATOR2 complex protein MIOS (Pongo abelii (Sumatran orangutan)).